The following is a 346-amino-acid chain: B3 domain-containing protein At5g60142 (346 aa).

A DNA-binding region (TF-B3) is located at residues P13 to A109. Disordered regions lie at residues Q158–D179 and T192–Q243. Residues T192–A217 show a composition bias toward acidic residues. Residues D218–T229 show a composition bias toward basic and acidic residues.

It localises to the nucleus. The polypeptide is B3 domain-containing protein At5g60142 (Arabidopsis thaliana (Mouse-ear cress)).